The following is a 310-amino-acid chain: 2-methoxy-6-polyprenyl-1,4-benzoquinol methylase, mitochondrial (310 aa).

The transit peptide at 1–6 (MAHMRS) directs the protein to the mitochondrion. S-adenosyl-L-methionine contacts are provided by residues T99, D154, and 182-183 (DA).

The protein belongs to the class I-like SAM-binding methyltransferase superfamily. MenG/UbiE family. In terms of assembly, component of a multi-subunit COQ enzyme complex, composed of at least coq3, coq4, coq5, coq6, coq7 and coq9.

Its subcellular location is the mitochondrion inner membrane. The enzyme catalyses a 2-methoxy-6-(all-trans-polyprenyl)benzene-1,4-diol + S-adenosyl-L-methionine = a 5-methoxy-2-methyl-3-(all-trans-polyprenyl)benzene-1,4-diol + S-adenosyl-L-homocysteine + H(+). It participates in cofactor biosynthesis; ubiquinone biosynthesis. Methyltransferase required for the conversion of 2-polyprenyl-6-methoxy-1,4-benzoquinol (DDMQH2) to 2-polyprenyl-3-methyl-6-methoxy-1,4-benzoquinol (DMQH2). This Xenopus laevis (African clawed frog) protein is 2-methoxy-6-polyprenyl-1,4-benzoquinol methylase, mitochondrial.